Reading from the N-terminus, the 187-residue chain is Probable cobalt-precorrin-6B C(15)-methyltransferase (decarboxylating) (187 aa).

Residues threonine 15, 39-43 (GSCTG), glutamate 60, and alanine 89 each bind S-adenosyl-L-methionine.

Belongs to the methyltransferase superfamily. Archaeal-type CbiT family.

The enzyme catalyses Co-precorrin-6B + S-adenosyl-L-methionine = Co-precorrin-7 + S-adenosyl-L-homocysteine + CO2. It functions in the pathway cofactor biosynthesis; adenosylcobalamin biosynthesis; cob(II)yrinate a,c-diamide from sirohydrochlorin (anaerobic route): step 8/10. Catalyzes the methylation of C-15 in cobalt-precorrin-6B followed by the decarboxylation of C-12 to form cobalt-precorrin-7. This Halobacterium salinarum (strain ATCC 700922 / JCM 11081 / NRC-1) (Halobacterium halobium) protein is Probable cobalt-precorrin-6B C(15)-methyltransferase (decarboxylating).